A 182-amino-acid chain; its full sequence is NADH-quinone oxidoreductase subunit B 2 (182 aa).

4 residues coordinate [4Fe-4S] cluster: cysteine 57, cysteine 58, cysteine 123, and cysteine 153.

The protein belongs to the complex I 20 kDa subunit family. NDH-1 is composed of 14 different subunits. Subunits NuoB, C, D, E, F, and G constitute the peripheral sector of the complex. It depends on [4Fe-4S] cluster as a cofactor.

The protein resides in the cell membrane. The catalysed reaction is a quinone + NADH + 5 H(+)(in) = a quinol + NAD(+) + 4 H(+)(out). In terms of biological role, NDH-1 shuttles electrons from NADH, via FMN and iron-sulfur (Fe-S) centers, to quinones in the respiratory chain. The immediate electron acceptor for the enzyme in this species is believed to be a menaquinone. Couples the redox reaction to proton translocation (for every two electrons transferred, four hydrogen ions are translocated across the cytoplasmic membrane), and thus conserves the redox energy in a proton gradient. This Symbiobacterium thermophilum (strain DSM 24528 / JCM 14929 / IAM 14863 / T) protein is NADH-quinone oxidoreductase subunit B 2.